A 229-amino-acid polypeptide reads, in one-letter code: Lipoprotein-releasing system ATP-binding protein LolD (229 aa).

In terms of domain architecture, ABC transporter spans 9–228 (HGLRKIYREA…QDGNLVQVEV (220 aa)). Residue 42-49 (GSSGSGKS) participates in ATP binding.

The protein belongs to the ABC transporter superfamily. Lipoprotein translocase (TC 3.A.1.125) family. In terms of assembly, the complex is composed of two ATP-binding proteins (LolD) and two transmembrane proteins (LolC and LolE).

It localises to the cell inner membrane. Its function is as follows. Part of the ABC transporter complex LolCDE involved in the translocation of mature outer membrane-directed lipoproteins, from the inner membrane to the periplasmic chaperone, LolA. Responsible for the formation of the LolA-lipoprotein complex in an ATP-dependent manner. The chain is Lipoprotein-releasing system ATP-binding protein LolD from Photobacterium profundum (strain SS9).